Here is a 176-residue protein sequence, read N- to C-terminus: MSNKDNDLDDDFSLFREAVQGIKKLPQDTIVQQPNRNTKQKEIKRISREASDSEFYFSDEFVPLLNEEGPTRYARDDVSTYEVKRLRRGVYVPDVFLDMHGMTQQEAKRELGAMIAYCVKNEVHCACVQHGIGKHILKQKTPRWLAQHPDVLAFHQAPLEFGGDGALLVLLSIPEK.

One can recognise a Smr domain in the interval 97–172 (LDMHGMTQQE…GDGALLVLLS (76 aa)).

The protein belongs to the SmrB family. Associates with collided ribosomes, but not with correctly translating polysomes.

Its function is as follows. Acts as a ribosome collision sensor. Detects stalled/collided disomes (pairs of ribosomes where the leading ribosome is stalled and a second ribosome has collided with it) and endonucleolytically cleaves mRNA at the 5' boundary of the stalled ribosome. Stalled/collided disomes form a new interface (primarily via the 30S subunits) that binds SmrB. Cleaved mRNA becomes available for tmRNA ligation, leading to ribosomal subunit dissociation and rescue of stalled ribosomes. This chain is Ribosome rescue factor SmrB, found in Vibrio vulnificus (strain CMCP6).